The primary structure comprises 264 residues: Thymidylate synthase (264 aa).

Arg21 provides a ligand contact to dUMP. His51 provides a ligand contact to (6R)-5,10-methylene-5,6,7,8-tetrahydrofolate. Residue 126-127 participates in dUMP binding; it reads RR. The Nucleophile role is filled by Cys146. Residues 166–169, Asn177, and 207–209 each bind dUMP; these read RSAD and HLY. Asp169 serves as a coordination point for (6R)-5,10-methylene-5,6,7,8-tetrahydrofolate. (6R)-5,10-methylene-5,6,7,8-tetrahydrofolate is bound at residue Ala263.

This sequence belongs to the thymidylate synthase family. Bacterial-type ThyA subfamily. In terms of assembly, homodimer.

Its subcellular location is the cytoplasm. The enzyme catalyses dUMP + (6R)-5,10-methylene-5,6,7,8-tetrahydrofolate = 7,8-dihydrofolate + dTMP. Its pathway is pyrimidine metabolism; dTTP biosynthesis. Functionally, catalyzes the reductive methylation of 2'-deoxyuridine-5'-monophosphate (dUMP) to 2'-deoxythymidine-5'-monophosphate (dTMP) while utilizing 5,10-methylenetetrahydrofolate (mTHF) as the methyl donor and reductant in the reaction, yielding dihydrofolate (DHF) as a by-product. This enzymatic reaction provides an intracellular de novo source of dTMP, an essential precursor for DNA biosynthesis. This is Thymidylate synthase from Thiobacillus denitrificans (strain ATCC 25259 / T1).